The primary structure comprises 151 residues: MMALLHKEKLIECIENEVLSGGTVLLLVKNIVVSEISYIDNSYKYFTFNANHDLKSKEDLKGATSNNIAKMIYNWIIKNPQNNKIWSGEPRTQIYFENDLYHTNYNHECIKDFWDVSTSVGPCIFNDRSIWCTKCTSFYPFTNIMSPNIFQ.

Histidine 102, cysteine 109, cysteine 132, and cysteine 135 together coordinate Zn(2+). The short motif at tryptophan 131–cysteine 135 is the Thioredoxin WCTKC motif element.

The protein belongs to the asfivirus A151R family. In terms of assembly, monomer. Homodimer. Interacts with protein B119L. Interacts with membrane protein E248R. Zn(2+) serves as cofactor.

In terms of biological role, may participate in a redox cascade for the formation of disulfide bonds in viral proteins. The chain is Protein A151R from African swine fever virus (strain Badajoz 1971 Vero-adapted) (Ba71V).